The sequence spans 339 residues: Methylthioribose-1-phosphate isomerase (339 aa).

Substrate is bound by residues 52–54 (RGA), Arg-89, and Gln-188. Catalysis depends on Asp-229, which acts as the Proton donor. Position 239–240 (239–240 (NK)) interacts with substrate.

Belongs to the eIF-2B alpha/beta/delta subunits family. MtnA subfamily.

The enzyme catalyses 5-(methylsulfanyl)-alpha-D-ribose 1-phosphate = 5-(methylsulfanyl)-D-ribulose 1-phosphate. The protein operates within amino-acid biosynthesis; L-methionine biosynthesis via salvage pathway; L-methionine from S-methyl-5-thio-alpha-D-ribose 1-phosphate: step 1/6. Its function is as follows. Catalyzes the interconversion of methylthioribose-1-phosphate (MTR-1-P) into methylthioribulose-1-phosphate (MTRu-1-P). This is Methylthioribose-1-phosphate isomerase from Anaeromyxobacter sp. (strain K).